Consider the following 548-residue polypeptide: uncharacterized protein (548 aa).

The DhaL domain maps to 8 to 200 (KLFADMIIQG…LLCVYEGFLK (193 aa)).

This is an uncharacterized protein from Staphylococcus aureus (strain bovine RF122 / ET3-1).